Reading from the N-terminus, the 764-residue chain is MFLLMASVLPIRQAPMNGTPISASAAAGVDGVGAAVALAAATKKSAAAAAAVAEMAKTLTVDTDDAFAGLLELAADDDAEGLRRALERAPPAAADEAGLWYGRRKVLEHRTPLMVAATYGSLAVLRLLLSLPSVDVNRRCGSDGTTALHCAASGGSPSCVEAVKLLLAAGADADATDASGYRPADVISVPPKMFDAKIALQDLLGCPKAGHGVLRVVTRAANSMLSPVSSPTAEDARSPSAAVMMTTKFADLPRVVTSEKKEYPVDPSLPDIKNSIYASDEFRMYSFKIRPCSRAYSHDWTECPFVHPGENARRRDPRKYHYSCVPCPDFRKGVCRRGDMCEYAHGVFECWLHPAQYRTRLCKDGTSCNRRVCFFAHTTDELRPLYVSTGSAVPSPRASATATMEMAAAMGLMPGSPSSVSAVMSPFTPPMSPSGNGMPPSLGWQQPNVPTLHLPGSSLQSSRLRTSLSARDMPADDYSLMQDIDSQLINDLCYSRIGSSTGNHTSRTKSLNPSNLDDLFSAEMVSSPRYSNADQGGMFSPSHKAAFLNQFQQQQQALLSPINTVFSPKSVDNQQLPSHSSLLQASLGISSPGRMSPRCVESGSPMNSHLAAALAQREKQQQTMRSLSSRDLGPSAARASGVVGSPLSSSWSKWGSPSGTPDWGVNGEELGKLRRSSSFELRSGGDDPDLSWVHTLVKESPPEKQVTTAESINSVGPSPLMPPSVSNGEGPSLNAPLDGHDQAAVIGALLEQMQLDQHIGSLAT.

2 ANK repeats span residues 108–138 (EHRT…DVNR) and 143–175 (DGTT…DADA). The C3H1-type zinc-finger motif lies at 321 to 348 (HYSCVPCPDFRKGVCRRGDMCEYAHGVF). Disordered stretches follow at residues 616 to 665 (QREK…DWGV) and 698 to 732 (KESP…EGPS). Over residues 640 to 659 (SGVVGSPLSSSWSKWGSPSG) the composition is skewed to low complexity. Polar residues predominate over residues 705 to 716 (QVTTAESINSVG).

In Oryza sativa subsp. japonica (Rice), this protein is Zinc finger CCCH domain-containing protein 24.